The primary structure comprises 219 residues: Flagellar transcriptional regulator FlhC (219 aa).

Positions 137, 140, 157, and 160 each coordinate Zn(2+).

This sequence belongs to the FlhC family. In terms of assembly, heterohexamer composed of two FlhC and four FlhD subunits. Each FlhC binds a FlhD dimer, forming a heterotrimer, and a hexamer assembles by dimerization of two heterotrimers. It depends on Zn(2+) as a cofactor.

It localises to the cytoplasm. Functionally, functions in complex with FlhD as a master transcriptional regulator that regulates transcription of several flagellar and non-flagellar operons by binding to their promoter region. Activates expression of class 2 flagellar genes, including fliA, which is a flagellum-specific sigma factor that turns on the class 3 genes. Also regulates genes whose products function in a variety of physiological pathways. This is Flagellar transcriptional regulator FlhC from Paraburkholderia phymatum (strain DSM 17167 / CIP 108236 / LMG 21445 / STM815) (Burkholderia phymatum).